A 139-amino-acid polypeptide reads, in one-letter code: MAENSVLTVSIVTPDGQVYDDDQVTMLVVNTKEGELGILPNHVPVIAALAIDEVRVKHSQEEDVIAVNGGFVEFSENTATIVADTAENQSDIDVARAESAKKRAEATIRKAQQAHDNSELRRAQISLRRAINRINVSKH.

Belongs to the ATPase epsilon chain family. In terms of assembly, F-type ATPases have 2 components, CF(1) - the catalytic core - and CF(0) - the membrane proton channel. CF(1) has five subunits: alpha(3), beta(3), gamma(1), delta(1), epsilon(1). CF(0) has three main subunits: a, b and c.

It is found in the cell membrane. Its function is as follows. Produces ATP from ADP in the presence of a proton gradient across the membrane. This is ATP synthase epsilon chain from Pediococcus pentosaceus (strain ATCC 25745 / CCUG 21536 / LMG 10740 / 183-1w).